The sequence spans 146 residues: Small ribosomal subunit protein uS5 (146 aa).

Residues 8-71 enclose the S5 DRBM domain; sequence FSEVVVNIGR…DDAFKNIIKV (64 aa).

The protein belongs to the universal ribosomal protein uS5 family. In terms of assembly, part of the 30S ribosomal subunit. Contacts proteins S4 and S8.

With S4 and S12 plays an important role in translational accuracy. Functionally, located at the back of the 30S subunit body where it stabilizes the conformation of the head with respect to the body. In Helicobacter hepaticus (strain ATCC 51449 / 3B1), this protein is Small ribosomal subunit protein uS5.